We begin with the raw amino-acid sequence, 441 residues long: Methylenetetrahydrofolate--tRNA-(uracil-5-)-methyltransferase TrmFO (441 aa).

11 to 16 (GAGLAG) provides a ligand contact to FAD.

The protein belongs to the MnmG family. TrmFO subfamily. FAD serves as cofactor.

It localises to the cytoplasm. It catalyses the reaction uridine(54) in tRNA + (6R)-5,10-methylene-5,6,7,8-tetrahydrofolate + NADH + H(+) = 5-methyluridine(54) in tRNA + (6S)-5,6,7,8-tetrahydrofolate + NAD(+). The enzyme catalyses uridine(54) in tRNA + (6R)-5,10-methylene-5,6,7,8-tetrahydrofolate + NADPH + H(+) = 5-methyluridine(54) in tRNA + (6S)-5,6,7,8-tetrahydrofolate + NADP(+). In terms of biological role, catalyzes the folate-dependent formation of 5-methyl-uridine at position 54 (M-5-U54) in all tRNAs. This Lactiplantibacillus plantarum (strain ATCC BAA-793 / NCIMB 8826 / WCFS1) (Lactobacillus plantarum) protein is Methylenetetrahydrofolate--tRNA-(uracil-5-)-methyltransferase TrmFO.